Consider the following 238-residue polypeptide: Chorionic somatomammotropin hormone 2 (238 aa).

An N-terminal signal peptide occupies residues 1–36 (MAPAPSFRGHQWTYNPVRGSCLLLLLVVSNLLLCQG). His-66 serves as a coordination point for Zn(2+). N-linked (GlcNAc...) asparagine glycosylation is found at Asn-70, Asn-92, Asn-146, and Asn-160. Cys-97 and Cys-215 are joined by a disulfide. Position 224 (Asp-224) interacts with Zn(2+). Cysteines 232 and 238 form a disulfide.

The protein belongs to the somatotropin/prolactin family.

It localises to the secreted. The protein is Chorionic somatomammotropin hormone 2 (CSH2) of Bos taurus (Bovine).